The sequence spans 364 residues: Molybdenum import ATP-binding protein ModC (364 aa).

The region spanning 1–229 (MLLIDIKKQL…PLMRPWLNAS (229 aa)) is the ABC transporter domain. An ATP-binding site is contributed by 31 to 38 (GRSGAGKS). In terms of domain architecture, Mop spans 293-360 (HSSIRNILPV…IKGVSVTQSD (68 aa)).

It belongs to the ABC transporter superfamily. Molybdate importer (TC 3.A.1.8) family. As to quaternary structure, the complex is composed of two ATP-binding proteins (ModC), two transmembrane proteins (ModB) and a solute-binding protein (ModA).

It is found in the cell inner membrane. The catalysed reaction is molybdate(out) + ATP + H2O = molybdate(in) + ADP + phosphate + H(+). Functionally, part of the ABC transporter complex ModABC involved in molybdenum import. Responsible for energy coupling to the transport system. The sequence is that of Molybdenum import ATP-binding protein ModC from Aliivibrio fischeri (strain ATCC 700601 / ES114) (Vibrio fischeri).